We begin with the raw amino-acid sequence, 265 residues long: Imidazole glycerol phosphate synthase subunit HisF (265 aa).

Residues aspartate 17 and aspartate 136 contribute to the active site.

This sequence belongs to the HisA/HisF family. Heterodimer of HisH and HisF.

It is found in the cytoplasm. The enzyme catalyses 5-[(5-phospho-1-deoxy-D-ribulos-1-ylimino)methylamino]-1-(5-phospho-beta-D-ribosyl)imidazole-4-carboxamide + L-glutamine = D-erythro-1-(imidazol-4-yl)glycerol 3-phosphate + 5-amino-1-(5-phospho-beta-D-ribosyl)imidazole-4-carboxamide + L-glutamate + H(+). It functions in the pathway amino-acid biosynthesis; L-histidine biosynthesis; L-histidine from 5-phospho-alpha-D-ribose 1-diphosphate: step 5/9. Functionally, IGPS catalyzes the conversion of PRFAR and glutamine to IGP, AICAR and glutamate. The HisF subunit catalyzes the cyclization activity that produces IGP and AICAR from PRFAR using the ammonia provided by the HisH subunit. This Mycobacterium avium (strain 104) protein is Imidazole glycerol phosphate synthase subunit HisF.